The sequence spans 208 residues: Protein-L-isoaspartate O-methyltransferase (208 aa).

Ser59 is a catalytic residue.

Belongs to the methyltransferase superfamily. L-isoaspartyl/D-aspartyl protein methyltransferase family.

It localises to the cytoplasm. The catalysed reaction is [protein]-L-isoaspartate + S-adenosyl-L-methionine = [protein]-L-isoaspartate alpha-methyl ester + S-adenosyl-L-homocysteine. Catalyzes the methyl esterification of L-isoaspartyl residues in peptides and proteins that result from spontaneous decomposition of normal L-aspartyl and L-asparaginyl residues. It plays a role in the repair and/or degradation of damaged proteins. The chain is Protein-L-isoaspartate O-methyltransferase from Photorhabdus laumondii subsp. laumondii (strain DSM 15139 / CIP 105565 / TT01) (Photorhabdus luminescens subsp. laumondii).